The chain runs to 952 residues: 2-oxoglutarate dehydrogenase E1 component (952 aa).

Belongs to the alpha-ketoglutarate dehydrogenase family. Homodimer. Part of the 2-oxoglutarate dehydrogenase (OGDH) complex composed of E1 (2-oxoglutarate dehydrogenase), E2 (dihydrolipoamide succinyltransferase) and E3 (dihydrolipoamide dehydrogenase); the complex contains multiple copies of the three enzymatic components (E1, E2 and E3). Thiamine diphosphate serves as cofactor.

The enzyme catalyses N(6)-[(R)-lipoyl]-L-lysyl-[protein] + 2-oxoglutarate + H(+) = N(6)-[(R)-S(8)-succinyldihydrolipoyl]-L-lysyl-[protein] + CO2. Functionally, E1 component of the 2-oxoglutarate dehydrogenase (OGDH) complex which catalyzes the decarboxylation of 2-oxoglutarate, the first step in the conversion of 2-oxoglutarate to succinyl-CoA and CO(2). The sequence is that of 2-oxoglutarate dehydrogenase E1 component from Geobacillus sp. (strain WCH70).